A 934-amino-acid chain; its full sequence is Serine/threonine-protein kinase PknD (934 aa).

The 293-residue stretch at 4-296 folds into the Protein kinase domain; the sequence is YELIRLIGKG…ELRQALQPYL (293 aa). ATP-binding positions include 10-18 and Lys33; that span reads IGKGGMGEV. Residue Asp138 is the Proton acceptor of the active site.

The protein belongs to the protein kinase superfamily. Ser/Thr protein kinase family. As to quaternary structure, interacts with Pkn1. In terms of processing, autophosphorylated on serine and threonine residues.

The catalysed reaction is L-seryl-[protein] + ATP = O-phospho-L-seryl-[protein] + ADP + H(+). It catalyses the reaction L-threonyl-[protein] + ATP = O-phospho-L-threonyl-[protein] + ADP + H(+). Functionally, together with the serine/threonine kinase Pkn1, may play a role in the specific interactions with host proteins during intracellular growth. Autophosphorylates and also phosphorylates Pkn1. The protein is Serine/threonine-protein kinase PknD of Chlamydia trachomatis serovar D (strain ATCC VR-885 / DSM 19411 / UW-3/Cx).